The following is a 183-amino-acid chain: MAQRASRRPAAAAAAVVVAVVLAVSGGVGATPETACRAAAEEDRRVDYEFCVSRLSHHHDSPDADTWGLAKVAADVGVCIAGDAAYDAKAKLQAAKAGGEREALERCAELYDRMGSAFAAAYDDINRREYAAGKEKAGEAASLARRCDGAFADAGVAPSPLERQTAESVKIAIVCTAITNLVK.

Positions 1-30 are cleaved as a signal peptide; the sequence is MAQRASRRPAAAAAAVVVAVVLAVSGGVGA. Intrachain disulfides connect Cys36–Cys51 and Cys107–Cys147.

The protein belongs to the PMEI family.

It localises to the secreted. The protein localises to the extracellular space. It is found in the apoplast. Pectin methylesterase (PME) inhibitor that inhibits PME in vitro. This is Pectinesterase inhibitor 8 from Oryza sativa subsp. japonica (Rice).